Reading from the N-terminus, the 65-residue chain is Small, acid-soluble spore protein H 3 (65 aa).

It belongs to the SspH family.

Its subcellular location is the spore core. The sequence is that of Small, acid-soluble spore protein H 3 from Geobacillus thermodenitrificans (strain NG80-2).